The primary structure comprises 901 residues: MLPGCYTHRLNMSDTQDPPQDESTTDESADALDGEYDPREIEPEWQDQWVADKTYAYDEDADTRFSIDTPPPTVSGNLHMGHLYQFTLQDFVARFHRMRDDTVYFPFGYDDNGIASERLTERELDIRHQDYPRREFQEKCRDVCTQFEDEFTQDVQSLAISIDWDNTYKTIAPDVQRVSQLSFLDLYEQGREYRQRAPTIWCPDCETAISQVEQEDKDKHTKFNDIAFDLVETGEGPADEDATFTISTTRPELLPACVAVFVHPDDDENQHLVGGSARVPLFEQEVPVIADERVDMETGSGIVMCCTFGDQNDIEWYQAHDLPLRLAIDESATMTDVAGEYEGMHTTEAREAIIEDLREEGSLLESRDHDHTVQVHERCEEEVEYLVTEQWYIELLDKKEEYIEAGRQMEWYPEKMATRYEHWIEGLEWDWCISRQRDSGIPIPVWYCDDCGEPVMAEREQLPVDPLSDAPPVDSCPECGHDSLTPEEDVFDTWATSSLTPLVNAGWDWDADSESFTMELPELYPFDLRPQGHDIISFWLFHTVVKCYEHTGEVPFENVMINGMVLDENREAMSKSKGNVIPPSEVLEEFPVDATRYWAAGTSIGDDFPYKEGDLEAGERLLQKLWNASRLVDQLTPAARPDEPEELAAVDEWLLAELDATVESVTAKFEDYEFSKARNELRSFFWNTFCDDYLEIAKQRLSDGEAVSTEFTLLQAHRTFLQLFAPFLPHITEELWERCYEEDSSIHTTDWPTSGGYDADLEAGETAMEVVSALRRYKTENGLPLNADLDHVEVFGHIAGFEDAVAEAMHVAQLDTYDEAPDITTEISGIDLDYSLVGPEFGSEVGAIDAAIEDGDYEIDGDTLQVAGVELDDEMFAVEESRTYSGEGEMTETESAVVVVR.

Residues methionine 1–aspartate 37 are disordered. Residues proline 19–glutamate 35 are compositionally biased toward acidic residues. The 'HIGH' region motif lies at proline 72–histidine 82. The short motif at alanine 572–serine 576 is the 'KMSKS' region element. Lysine 575 serves as a coordination point for ATP.

Belongs to the class-I aminoacyl-tRNA synthetase family. ValS type 2 subfamily.

It localises to the cytoplasm. It catalyses the reaction tRNA(Val) + L-valine + ATP = L-valyl-tRNA(Val) + AMP + diphosphate. Functionally, catalyzes the attachment of valine to tRNA(Val). As ValRS can inadvertently accommodate and process structurally similar amino acids such as threonine, to avoid such errors, it has a 'posttransfer' editing activity that hydrolyzes mischarged Thr-tRNA(Val) in a tRNA-dependent manner. The polypeptide is Valine--tRNA ligase (Haloarcula marismortui (strain ATCC 43049 / DSM 3752 / JCM 8966 / VKM B-1809) (Halobacterium marismortui)).